A 394-amino-acid chain; its full sequence is Elongation factor Tu 1 (394 aa).

One can recognise a tr-type G domain in the interval 10 to 204 (KPHVNVGTIG…ALDSYIPEPE (195 aa)). The interval 19–26 (GHVDHGKT) is G1. 19–26 (GHVDHGKT) provides a ligand contact to GTP. T26 lines the Mg(2+) pocket. Residues 60–64 (GITIS) form a G2 region. The segment at 81–84 (DCPG) is G3. GTP-binding positions include 81–85 (DCPGH) and 136–139 (NKCD). Residues 136 to 139 (NKCD) are G4. Residues 174-176 (SAL) are G5.

The protein belongs to the TRAFAC class translation factor GTPase superfamily. Classic translation factor GTPase family. EF-Tu/EF-1A subfamily. In terms of assembly, monomer.

The protein localises to the cytoplasm. The enzyme catalyses GTP + H2O = GDP + phosphate + H(+). GTP hydrolase that promotes the GTP-dependent binding of aminoacyl-tRNA to the A-site of ribosomes during protein biosynthesis. The sequence is that of Elongation factor Tu 1 from Photorhabdus laumondii subsp. laumondii (strain DSM 15139 / CIP 105565 / TT01) (Photorhabdus luminescens subsp. laumondii).